Consider the following 634-residue polypeptide: Lamin tail domain-containing protein 2 (634 aa).

A disordered region spans residues 1 to 44; sequence MRWLRPAGRRREQESVSGHLGPPAGAPAAPETPTCLPDTTPHPA. Positions 106–169 form a coiled coil; that stretch reads SHSQEKLLQN…QKSCLLQLAR (64 aa). Residues 228 to 237 show a composition bias toward polar residues; it reads FTNMEPSSKQ. Disordered regions lie at residues 228–349 and 464–575; these read FTNM…TDPD and HRIP…PAEA. Residues 276 to 287 show a composition bias toward low complexity; the sequence is SSSGGADSDSSS. Over residues 310-321 the composition is skewed to polar residues; it reads SEQALVQAGSYS. Over residues 322 to 337 the composition is skewed to basic and acidic residues; sequence RDSEDLQKTHSPRHGE. Residues 350-468 enclose the LTD domain; the sequence is HWSPELLQSP…EVLSEHRIPR (119 aa). Basic residues predominate over residues 502 to 513; it reads PPRPPRPLRKGR. Residues 540-550 show a composition bias toward basic and acidic residues; the sequence is HAREGPARPEN.

This chain is Lamin tail domain-containing protein 2 (LMNTD2), found in Homo sapiens (Human).